The primary structure comprises 207 residues: Large ribosomal subunit protein uL4 (207 aa).

The interval 44-78 is disordered; it reads LRQGTHKTKTRSEVRGGGRKPWRQKGTGRARQGSI. Positions 60–71 are enriched in basic residues; it reads GGRKPWRQKGTG.

This sequence belongs to the universal ribosomal protein uL4 family. In terms of assembly, part of the 50S ribosomal subunit.

Its function is as follows. One of the primary rRNA binding proteins, this protein initially binds near the 5'-end of the 23S rRNA. It is important during the early stages of 50S assembly. It makes multiple contacts with different domains of the 23S rRNA in the assembled 50S subunit and ribosome. Functionally, forms part of the polypeptide exit tunnel. This Halalkalibacterium halodurans (strain ATCC BAA-125 / DSM 18197 / FERM 7344 / JCM 9153 / C-125) (Bacillus halodurans) protein is Large ribosomal subunit protein uL4.